The sequence spans 417 residues: Cysteate synthase (417 aa).

The residue at position 102 (Lys102) is an N6-(pyridoxal phosphate)lysine. Positions 128 and 380 each coordinate pyridoxal 5'-phosphate.

The protein belongs to the threonine synthase family. Cysteate synthase subfamily. Homotrimer. Requires pyridoxal 5'-phosphate as cofactor.

The enzyme catalyses O-phospho-L-serine + sulfite + H(+) = L-cysteate + phosphate. It participates in cofactor biosynthesis; coenzyme M biosynthesis. Its function is as follows. Specifically catalyzes the beta-elimination of phosphate from L-phosphoserine and the beta-addition of sulfite to the dehydroalanine intermediate to produce L-cysteate. This Methanocella arvoryzae (strain DSM 22066 / NBRC 105507 / MRE50) protein is Cysteate synthase.